The primary structure comprises 149 residues: SsrA-binding protein (149 aa).

The protein belongs to the SmpB family.

The protein resides in the cytoplasm. Functionally, required for rescue of stalled ribosomes mediated by trans-translation. Binds to transfer-messenger RNA (tmRNA), required for stable association of tmRNA with ribosomes. tmRNA and SmpB together mimic tRNA shape, replacing the anticodon stem-loop with SmpB. tmRNA is encoded by the ssrA gene; the 2 termini fold to resemble tRNA(Ala) and it encodes a 'tag peptide', a short internal open reading frame. During trans-translation Ala-aminoacylated tmRNA acts like a tRNA, entering the A-site of stalled ribosomes, displacing the stalled mRNA. The ribosome then switches to translate the ORF on the tmRNA; the nascent peptide is terminated with the 'tag peptide' encoded by the tmRNA and targeted for degradation. The ribosome is freed to recommence translation, which seems to be the essential function of trans-translation. This is SsrA-binding protein from Fervidobacterium nodosum (strain ATCC 35602 / DSM 5306 / Rt17-B1).